Here is a 501-residue protein sequence, read N- to C-terminus: ATP synthase subunit alpha (501 aa).

Glycine 169–threonine 176 serves as a coordination point for ATP.

This sequence belongs to the ATPase alpha/beta chains family. In terms of assembly, F-type ATPases have 2 components, CF(1) - the catalytic core - and CF(0) - the membrane proton channel. CF(1) has five subunits: alpha(3), beta(3), gamma(1), delta(1), epsilon(1). CF(0) has three main subunits: a(1), b(2) and c(9-12). The alpha and beta chains form an alternating ring which encloses part of the gamma chain. CF(1) is attached to CF(0) by a central stalk formed by the gamma and epsilon chains, while a peripheral stalk is formed by the delta and b chains.

It localises to the cell membrane. The enzyme catalyses ATP + H2O + 4 H(+)(in) = ADP + phosphate + 5 H(+)(out). In terms of biological role, produces ATP from ADP in the presence of a proton gradient across the membrane. The alpha chain is a regulatory subunit. The polypeptide is ATP synthase subunit alpha (Desulforamulus reducens (strain ATCC BAA-1160 / DSM 100696 / MI-1) (Desulfotomaculum reducens)).